The primary structure comprises 225 residues: UPF0173 metal-dependent hydrolase PYRAB05000 (225 aa).

It belongs to the UPF0173 family.

The polypeptide is UPF0173 metal-dependent hydrolase PYRAB05000 (Pyrococcus abyssi (strain GE5 / Orsay)).